The following is a 181-amino-acid chain: UPF0398 protein lmo1889 (181 aa).

This sequence belongs to the UPF0398 family.

This is UPF0398 protein lmo1889 from Listeria monocytogenes serovar 1/2a (strain ATCC BAA-679 / EGD-e).